Here is a 566-residue protein sequence, read N- to C-terminus: Type 3 secretion system secretin (566 aa).

Positions 1-22 (MKKFNIKSLTLLIVLLPLIVNA) are cleaved as a signal peptide.

Belongs to the bacterial secretin family. T3SS SctC subfamily. In terms of assembly, the core secretion machinery of the T3SS is composed of approximately 20 different proteins, including cytoplasmic components, a base, an export apparatus and a needle. This subunit is part of the base, which anchors the injectisome in the bacterial cell envelope. Forms a stable homooligomeric complex. Interacts with the pilotin MxiM/SctG and the inner membrane ring outer protein MxiJ/SctJ.

It is found in the cell outer membrane. Its function is as follows. Component of the type III secretion system (T3SS), also called injectisome, which is used to inject bacterial effector proteins into eukaryotic host cells. Forms a ring-shaped multimeric structure with an apparent central pore in the outer membrane. Necessary for the secretion of Ipa invasins. The protein is Type 3 secretion system secretin of Shigella flexneri.